A 142-amino-acid polypeptide reads, in one-letter code: Hemoglobin subunit alpha-A (142 aa).

The 141-residue stretch at 2–142 (VLSAADKTNV…VGTVLTAKYR (141 aa)) folds into the Globin domain. Histidine 59 provides a ligand contact to O2. Histidine 88 contributes to the heme b binding site.

Belongs to the globin family. Heterotetramer of two alpha chains and two beta chains. In terms of tissue distribution, red blood cells.

In terms of biological role, involved in oxygen transport from the lung to the various peripheral tissues. This is Hemoglobin subunit alpha-A (HBAA) from Anser indicus (Bar-headed goose).